Consider the following 431-residue polypeptide: NADH-quinone oxidoreductase subunit D 2 (431 aa).

The tract at residues 1 to 37 is disordered; the sequence is MSEAKGVGGIDPRATPGSAGAGERPPMGTLSPRAGEG.

The protein belongs to the complex I 49 kDa subunit family. In terms of assembly, NDH-1 is composed of 14 different subunits. Subunits NuoB, C, D, E, F, and G constitute the peripheral sector of the complex.

The protein resides in the cell inner membrane. The catalysed reaction is a quinone + NADH + 5 H(+)(in) = a quinol + NAD(+) + 4 H(+)(out). In terms of biological role, NDH-1 shuttles electrons from NADH, via FMN and iron-sulfur (Fe-S) centers, to quinones in the respiratory chain. The immediate electron acceptor for the enzyme in this species is believed to be ubiquinone. Couples the redox reaction to proton translocation (for every two electrons transferred, four hydrogen ions are translocated across the cytoplasmic membrane), and thus conserves the redox energy in a proton gradient. This is NADH-quinone oxidoreductase subunit D 2 from Anaeromyxobacter sp. (strain K).